A 715-amino-acid polypeptide reads, in one-letter code: MNSIIGGTDPLSMIFKEEEIKKQQILLEKEEKEKQEQQQKKLNKDNIFKLEEEGKKLELSTKVHIQHPNISTTSDNNSLLDPSNLTLNGKKKKWINSFCIINFDLEIGQVLDYSFPQVNFKEEESTNLCFLSFPDSNSHLQGDIIYSFKLKETSSLGNGQCNFQYGYVFFRQEKDSSISRGYLQKSVVLLSDESFVGLFKKVMEIVGPLYFDHGNTLLEVAYQNIMNWPELKLGQTYELPILGYILTFHVPHTRGTPHIIDPVVKQHQLGGGSGGGLSSSPSSSSGGGNIPTSNTTGVSPSIWSEMKLVSNLKSIDIYGCFKSFTTKLWMLWELVLLGHPLLVISPNPPMCSDSVLALVSLISPLHYCGDYRPYFTIHDTDFHKYTSFSHLSGTRPDDSNNNNNQDDSEYNNNNNNNGIPPSILGVTNPFFLKALGNWPNILTIGTTQQRLGGFKKIKSSLPNIMSKDLLTRHVLDNKEKILSEYKPFISPDKSVLKKITESADDDIINEVLRTHFLQLTQKFLIPLERYFSLLLPLAKTISIFQRPPRLKPFIKEECLNKIMETDERFIIDNKSKEIELYKQFLDCVNFKQWLDDKRAQAIKHLNILYRKAILDADIHTLLRGKPISTATDLLKRVEDQLILEENLFQTSKEIKDKFKSHIEIIRQYKNNCDNNNENNNNNILLTSPIKSTSLSSIALPPSSTTVTTKTTTTTK.

The stretch at Met13–Glu58 forms a coiled coil. One can recognise a uDENN domain in the interval Asn96 to Ser273. Disordered regions lie at residues Leu269–Thr296 and Ser392–Asn416. The cDENN domain occupies Ser299 to Asp476. Residues Ser399 to Asn416 show a composition bias toward low complexity. A dDENN domain is found at Lys478–Gln600.

It belongs to the DENND6 family.

The protein is Protein DENND6 homolog of Dictyostelium discoideum (Social amoeba).